A 634-amino-acid chain; its full sequence is Threonine--tRNA ligase (634 aa).

The editing domain stretch occupies residues 1-142; the sequence is MQLLLIHSDY…LSRSIRPEGA (142 aa). The tract at residues 214–513 is catalytic; sequence PHVELMRRLE…TEEGKVPMLP (300 aa). Positions 306, 358, and 482 each coordinate Zn(2+).

Belongs to the class-II aminoacyl-tRNA synthetase family. Homodimer. Zn(2+) is required as a cofactor.

The protein localises to the cytoplasm. It catalyses the reaction tRNA(Thr) + L-threonine + ATP = L-threonyl-tRNA(Thr) + AMP + diphosphate + H(+). Functionally, catalyzes the attachment of threonine to tRNA(Thr) in a two-step reaction: L-threonine is first activated by ATP to form Thr-AMP and then transferred to the acceptor end of tRNA(Thr). Edits incorrectly charged L-seryl-tRNA(Thr) probably via its editing domain (tested with total bovine tRNA). Activates L-serine, but does not detectably transfer it to tRNA (tested with total bovine tRNA). The chain is Threonine--tRNA ligase from Methanosarcina mazei (strain ATCC BAA-159 / DSM 3647 / Goe1 / Go1 / JCM 11833 / OCM 88) (Methanosarcina frisia).